A 260-amino-acid chain; its full sequence is 3-methyl-2-oxobutanoate hydroxymethyltransferase (260 aa).

Positions 42 and 81 each coordinate Mg(2+). Residues 42-43, Asp-81, and Lys-109 each bind 3-methyl-2-oxobutanoate; that span reads DS. Glu-111 is a binding site for Mg(2+). Glu-178 (proton acceptor) is an active-site residue.

The protein belongs to the PanB family. As to quaternary structure, homodecamer; pentamer of dimers. Mg(2+) serves as cofactor.

Its subcellular location is the cytoplasm. It catalyses the reaction 3-methyl-2-oxobutanoate + (6R)-5,10-methylene-5,6,7,8-tetrahydrofolate + H2O = 2-dehydropantoate + (6S)-5,6,7,8-tetrahydrofolate. It participates in cofactor biosynthesis; (R)-pantothenate biosynthesis; (R)-pantoate from 3-methyl-2-oxobutanoate: step 1/2. Functionally, catalyzes the reversible reaction in which hydroxymethyl group from 5,10-methylenetetrahydrofolate is transferred onto alpha-ketoisovalerate to form ketopantoate. The polypeptide is 3-methyl-2-oxobutanoate hydroxymethyltransferase (Ruthia magnifica subsp. Calyptogena magnifica).